A 166-amino-acid chain; its full sequence is Phosphopantetheine adenylyltransferase (166 aa).

Ser-11 provides a ligand contact to substrate. ATP is bound by residues 11-12 (SF) and His-19. Lys-43, Ala-76, and Arg-90 together coordinate substrate. ATP-binding positions include 91–93 (GLR), Glu-101, and 126–132 (MQPISSS).

It belongs to the bacterial CoaD family. In terms of assembly, homohexamer. It depends on Mg(2+) as a cofactor.

Its subcellular location is the cytoplasm. It catalyses the reaction (R)-4'-phosphopantetheine + ATP + H(+) = 3'-dephospho-CoA + diphosphate. It participates in cofactor biosynthesis; coenzyme A biosynthesis; CoA from (R)-pantothenate: step 4/5. Functionally, reversibly transfers an adenylyl group from ATP to 4'-phosphopantetheine, yielding dephospho-CoA (dPCoA) and pyrophosphate. The sequence is that of Phosphopantetheine adenylyltransferase from Streptococcus uberis (strain ATCC BAA-854 / 0140J).